We begin with the raw amino-acid sequence, 454 residues long: tRNA modification GTPase MnmE (454 aa).

Positions 23, 80, and 120 each coordinate (6S)-5-formyl-5,6,7,8-tetrahydrofolate. Residues 216–377 (GMKVVIAGRP…LRDHLKQSMG (162 aa)) form the TrmE-type G domain. N226 provides a ligand contact to K(+). Residues 226-231 (NAGKSS), 245-251 (TDIAGTT), 270-273 (DTAG), 335-338 (NKAD), and 358-360 (SAR) each bind GTP. S230 is a Mg(2+) binding site. Positions 245, 247, and 250 each coordinate K(+). T251 contributes to the Mg(2+) binding site. (6S)-5-formyl-5,6,7,8-tetrahydrofolate is bound at residue K454.

This sequence belongs to the TRAFAC class TrmE-Era-EngA-EngB-Septin-like GTPase superfamily. TrmE GTPase family. As to quaternary structure, homodimer. Heterotetramer of two MnmE and two MnmG subunits. K(+) serves as cofactor.

It is found in the cytoplasm. Functionally, exhibits a very high intrinsic GTPase hydrolysis rate. Involved in the addition of a carboxymethylaminomethyl (cmnm) group at the wobble position (U34) of certain tRNAs, forming tRNA-cmnm(5)s(2)U34. The chain is tRNA modification GTPase MnmE from Serratia proteamaculans (strain 568).